The sequence spans 644 residues: Exoribonuclease 2 (644 aa).

Residues 189 to 516 (REDLTALNFV…NHRLLKAIIT (328 aa)) enclose the RNB domain. The region spanning 561 to 643 (DTRFPAEIID…ETRNVVARPV (83 aa)) is the S1 motif domain.

It belongs to the RNR ribonuclease family. RNase II subfamily.

The protein localises to the cytoplasm. It catalyses the reaction Exonucleolytic cleavage in the 3'- to 5'-direction to yield nucleoside 5'-phosphates.. Functionally, involved in mRNA degradation. Hydrolyzes single-stranded polyribonucleotides processively in the 3' to 5' direction. This is Exoribonuclease 2 from Yersinia enterocolitica serotype O:8 / biotype 1B (strain NCTC 13174 / 8081).